Here is a 113-residue protein sequence, read N- to C-terminus: Fruiting body-specific class I hydrophobin fbh1 (113 aa).

An N-terminal signal peptide occupies residues 1–20 (MFSIRIATVVLAASALLAAA). Cystine bridges form between Cys33-Cys92, Cys40-Cys86, Cys41-Cys73, and Cys93-Cys106.

It belongs to the fungal hydrophobin family. Self-assembles to form functional amyloid fibrils called rodlets. Self-assembly into fibrillar rodlets occurs spontaneously at hydrophobic:hydrophilic interfaces and the rodlets further associate laterally to form amphipathic monolayers.

The protein resides in the secreted. The protein localises to the cell wall. Functionally, aerial growth, conidiation, and dispersal of filamentous fungi in the environment rely upon a capability of their secreting small amphipathic proteins called hydrophobins (HPBs) with low sequence identity. Class I can self-assemble into an outermost layer of rodlet bundles on aerial cell surfaces, conferring cellular hydrophobicity that supports fungal growth, development and dispersal; whereas Class II form highly ordered films at water-air interfaces through intermolecular interactions but contribute nothing to the rodlet structure. Fbh1 is a fruiting body-specific class I hydrophobin that is involved in the growth rate and primordia formation. In Pleurotus ostreatus (strain PC15) (Oyster mushroom), this protein is Fruiting body-specific class I hydrophobin fbh1.